A 663-amino-acid chain; its full sequence is COBRA-like protein 9 (663 aa).

An N-terminal signal peptide occupies residues 1–23 (MGVLLPIFFGVLLLFTVTPPSMS). Residues Asn63, Asn111, Asn121, Asn169, Asn203, Asn326, Asn355, Asn397, Asn409, Asn429, Asn470, Asn550, and Asn561 are each glycosylated (N-linked (GlcNAc...) asparagine). A lipid anchor (GPI-anchor amidated serine) is attached at Ser638. Positions 639-663 (GGRRNGAITVLSFITFYVAAFMVLL) are cleaved as a propeptide — removed in mature form.

This sequence belongs to the COBRA family. In terms of tissue distribution, expressed only in flowers.

It localises to the cell membrane. The polypeptide is COBRA-like protein 9 (COBL9) (Arabidopsis thaliana (Mouse-ear cress)).